Consider the following 548-residue polypeptide: Glutamate--tRNA ligase (548 aa).

Positions 102–112 (PSPSGPLHIGH) match the 'HIGH' region motif.

Belongs to the class-I aminoacyl-tRNA synthetase family. Glutamate--tRNA ligase type 2 subfamily.

The protein resides in the cytoplasm. It catalyses the reaction tRNA(Glu) + L-glutamate + ATP = L-glutamyl-tRNA(Glu) + AMP + diphosphate. Catalyzes the attachment of glutamate to tRNA(Glu) in a two-step reaction: glutamate is first activated by ATP to form Glu-AMP and then transferred to the acceptor end of tRNA(Glu). This chain is Glutamate--tRNA ligase, found in Thermoplasma acidophilum (strain ATCC 25905 / DSM 1728 / JCM 9062 / NBRC 15155 / AMRC-C165).